A 913-amino-acid polypeptide reads, in one-letter code: Protein ECT2 (913 aa).

An N-acetylalanine modification is found at Ala2. BRCT domains follow at residues 176 to 260 and 266 to 354; these read MLNL…AAVD and FKVP…MYLY. Thr359 carries the phosphothreonine; by PKC/PRKCI modification. Residues Ser367 and Ser370 each carry the phosphoserine modification. Thr373 carries the post-translational modification Phosphothreonine. Ser376 carries the phosphoserine modification. Short sequence motifs (nuclear localization signal) lie at residues 378–382 and 401–405; these read RKRRR and PRKRP. Disordered stretches follow at residues 389–415 and 427–450; these read QLSR…SIGS and IHYG…PPKQ. Residue Thr444 is modified to Phosphothreonine; by CDK1. The region spanning 452-641 is the DH domain; sequence ARWQVAKELY…KEVMTHINED (190 aa). Lys611 is covalently cross-linked (Glycyl lysine isopeptide (Lys-Gly) (interchain with G-Cter in SUMO2)). In terms of domain architecture, PH spans 675–794; sequence RVETVSLGEH…KMLCRHVANT (120 aa). Phosphoserine is present on residues Ser716 and Ser842. The residue at position 846 (Thr846) is a Phosphothreonine; by CDK1. The interval 853–874 is disordered; sequence MALSSSHSSEGRSPPSSGKLAV. A compositionally biased stretch (low complexity) spans 856–870; it reads SSSHSSEGRSPPSSG. 2 positions are modified to phosphoserine: Ser861 and Ser865.

In terms of assembly, homodimer. Homooligomer. Found in the centralspindlin complex. Interacts with NR1I3. Interacts (Thr-359 phosphorylated form) with PARD6A; the interaction is observed in cancer cells. Interacts (Thr-359 phosphorylated form) with PRKCI; the interaction is observed in cancer cells. Interacts with PKP4; the interaction is observed at the midbody. Interacts with RACGAP1; the interaction is direct, occurs in a microtubule-dependent manner, occurs at anaphase and during cytokinesis, is inhibited in metaphase by phosphorylation of ECT2 on Thr-373 and is stimulated in early anaphase by dephosphorylation of ECT2 probably on Thr-373 through CDK1 activity. Interacts with PLK1; the interaction is stimulated upon its phosphorylation on Thr-444. Interacts with RHOA; the interaction results in allosteric activation of ECT2. Interacts with KIF23, PARD3, PARD6B and PRKCQ. Interacts with NEDD9/HEF1. In terms of processing, phosphorylated by PLK1 in vitro. Hyperphosphorylated during the G2 phase of the cell cycle. Phosphorylation at Thr-373 occurs during the G2/M phase, relieves its auto-inhibition status and stimulates its GEF activity. Phosphorylation at Thr-444 in G2/M phase is required for subsequent binding with PLK1 and Rho exchange activation. Dephosphorylated at the time of cytokinesis. Phosphorylation at Thr-359 is required for its transformation activity in cancer cells. As to expression, highest expression in testis. Also detectable in brain, kidney, liver and spleen.

It is found in the nucleus. It localises to the cytoplasm. The protein localises to the cytoskeleton. The protein resides in the spindle. Its subcellular location is the cleavage furrow. It is found in the midbody. It localises to the cell junction. The protein localises to the tight junction. Its activity is regulated as follows. Autoinhibited by the C-terminal PH domain which folds back and binds to the surface of the DH domain, blocking binding of RHOA to the catalytic center of the DH domain. The 2nd BRCT domain is also involved in inhibition, probably by helping to impede RHOA binding. Allosterically activated by binding of activated GTP-bound RHOA to the PH domain which stimulates the release of PH inhibition and promotes the binding of substrate RHOA to the catalytic center. Binding of phosphorylated RACGAP1 to the N-terminal BRCT domain-containing region also releases autoinhibition. In terms of biological role, guanine nucleotide exchange factor (GEF) that catalyzes the exchange of GDP for GTP. Promotes guanine nucleotide exchange on the Rho family members of small GTPases, like RHOA, RHOC, RAC1 and CDC42. Required for signal transduction pathways involved in the regulation of cytokinesis. Component of the centralspindlin complex that serves as a microtubule-dependent and Rho-mediated signaling required for the myosin contractile ring formation during the cell cycle cytokinesis. Regulates the translocation of RHOA from the central spindle to the equatorial region. Plays a role in the control of mitotic spindle assembly; regulates the activation of CDC42 in metaphase for the process of spindle fibers attachment to kinetochores before chromosome congression. Involved in the regulation of epithelial cell polarity; participates in the formation of epithelial tight junctions in a polarity complex PARD3-PARD6-protein kinase PRKCQ-dependent manner. Plays a role in the regulation of neurite outgrowth. Inhibits phenobarbital (PB)-induced NR1I3 nuclear translocation. Stimulates the activity of RAC1 through its association with the oncogenic PARD6A-PRKCI complex in cancer cells, thereby acting to coordinately drive tumor cell proliferation and invasion. Also stimulates genotoxic stress-induced RHOB activity in breast cancer cells leading to their cell death. This Mus musculus (Mouse) protein is Protein ECT2 (Ect2).